We begin with the raw amino-acid sequence, 838 residues long: Leucine--tRNA ligase (838 aa).

Positions 36-46 (PYPSGKIHMGH) match the 'HIGH' region motif. Residues 611-615 (KMSKS) carry the 'KMSKS' region motif. Lysine 614 provides a ligand contact to ATP.

The protein belongs to the class-I aminoacyl-tRNA synthetase family.

It localises to the cytoplasm. It carries out the reaction tRNA(Leu) + L-leucine + ATP = L-leucyl-tRNA(Leu) + AMP + diphosphate. The sequence is that of Leucine--tRNA ligase from Wolbachia sp. subsp. Drosophila simulans (strain wRi).